Here is a 416-residue protein sequence, read N- to C-terminus: Adenylosuccinate synthetase (416 aa).

GTP-binding positions include 13–19 and 41–43; these read GDEGKGK and GHT. The Proton acceptor role is filled by Asp-14. Asp-14 and Gly-41 together coordinate Mg(2+). Residues 14–17, 39–42, Thr-126, Arg-140, Gln-220, Thr-235, and Arg-299 contribute to the IMP site; these read DEGK and NAGH. Residue His-42 is the Proton donor of the active site. 295-301 contributes to the substrate binding site; it reads TTTGRPR. GTP is bound by residues Arg-301, 327-329, and 405-407; these read KLD and STS.

The protein belongs to the adenylosuccinate synthetase family. In terms of assembly, homodimer. Requires Mg(2+) as cofactor.

It localises to the cytoplasm. The enzyme catalyses IMP + L-aspartate + GTP = N(6)-(1,2-dicarboxyethyl)-AMP + GDP + phosphate + 2 H(+). It functions in the pathway purine metabolism; AMP biosynthesis via de novo pathway; AMP from IMP: step 1/2. Functionally, plays an important role in the de novo pathway of purine nucleotide biosynthesis. Catalyzes the first committed step in the biosynthesis of AMP from IMP. The sequence is that of Adenylosuccinate synthetase from Sulfurovum sp. (strain NBC37-1).